The following is a 713-amino-acid chain: Histone-lysine N-methyltransferase SETDB2 (713 aa).

The tract at residues 78–109 is disordered; that stretch reads PEVNTHRSNHTPVTQSEQENKSSAVPSASCDN. A compositionally biased stretch (polar residues) spans 87 to 109; that stretch reads HTPVTQSEQENKSSAVPSASCDN. In terms of domain architecture, MBD spans 161–233; that stretch reads LSLKGENPLQ…DNFSFNTYVQ (73 aa). Residues 294–367 form the Pre-SET domain; sequence DSCDCSEGCI…MCQNRVIQHG (74 aa). Zn(2+) is bound by residues cysteine 296, cysteine 298, cysteine 302, cysteine 308, cysteine 310, cysteine 348, cysteine 352, cysteine 354, and cysteine 359. The 319-residue stretch at 370-688 folds into the SET domain; that stretch reads VRLQVFKSEK…ARTELTWDYG (319 aa). 380 to 382 contacts S-adenosyl-L-methionine; sequence KGW. Basic and acidic residues-rich tracts occupy residues 511 to 534 and 579 to 592; these read EDKN…HEDL and TKQV…KSQE. Disordered regions lie at residues 511-549 and 579-608; these read EDKN…QLTE and TKQV…CDEE. Residues arginine 642 and 645 to 646 each bind S-adenosyl-L-methionine; that span reads NH. Residues cysteine 648, cysteine 701, cysteine 703, and cysteine 708 each coordinate Zn(2+).

The protein belongs to the class V-like SAM-binding methyltransferase superfamily.

It localises to the nucleus. Its subcellular location is the chromosome. The enzyme catalyses N(6),N(6)-dimethyl-L-lysyl(9)-[histone H3] + S-adenosyl-L-methionine = N(6),N(6),N(6)-trimethyl-L-lysyl(9)-[histone H3] + S-adenosyl-L-homocysteine + H(+). Its function is as follows. Histone methyltransferase involved in left-right axis specification in early development and mitosis. Specifically trimethylates 'Lys-9' of histone H3 (H3K9me3). H3K9me3 is a specific tag for epigenetic transcriptional repression that recruits HP1 (CBX1, CBX3 and/or CBX5) proteins to methylated histones. Contributes to H3K9me3 in both the interspersed repetitive elements and centromere-associated repeats. Plays a role in chromosome condensation and segregation during mitosis. This chain is Histone-lysine N-methyltransferase SETDB2 (Setdb2), found in Mus musculus (Mouse).